A 229-amino-acid polypeptide reads, in one-letter code: Lipoprotein-releasing system ATP-binding protein LolD (229 aa).

Positions 7-229 constitute an ABC transporter domain; it reads LKCKNVTKTY…KNGKLYKKNL (223 aa). 43-50 contributes to the ATP binding site; that stretch reads GDSGSGKS.

The protein belongs to the ABC transporter superfamily. Lipoprotein translocase (TC 3.A.1.125) family. In terms of assembly, the complex is composed of two ATP-binding proteins (LolD) and two transmembrane proteins (LolC and LolE).

The protein resides in the cell membrane. Functionally, part of the ABC transporter complex LolCDE involved in the translocation of lipoproteins, in an ATP-dependent manner. The chain is Lipoprotein-releasing system ATP-binding protein LolD from Wigglesworthia glossinidia brevipalpis.